Here is a 469-residue protein sequence, read N- to C-terminus: ATP synthase subunit beta (469 aa).

156–163 provides a ligand contact to ATP; it reads GGAGVGKT.

Belongs to the ATPase alpha/beta chains family. In terms of assembly, F-type ATPases have 2 components, CF(1) - the catalytic core - and CF(0) - the membrane proton channel. CF(1) has five subunits: alpha(3), beta(3), gamma(1), delta(1), epsilon(1). CF(0) has three main subunits: a(1), b(2) and c(9-12). The alpha and beta chains form an alternating ring which encloses part of the gamma chain. CF(1) is attached to CF(0) by a central stalk formed by the gamma and epsilon chains, while a peripheral stalk is formed by the delta and b chains.

The protein localises to the cell membrane. The catalysed reaction is ATP + H2O + 4 H(+)(in) = ADP + phosphate + 5 H(+)(out). Functionally, produces ATP from ADP in the presence of a proton gradient across the membrane. The catalytic sites are hosted primarily by the beta subunits. In Bacillus cereus (strain AH820), this protein is ATP synthase subunit beta.